A 198-amino-acid polypeptide reads, in one-letter code: Ribonuclease HII (198 aa).

The RNase H type-2 domain maps to 10 to 198 (QLVAGVDEVG…PVKRALGLAS (189 aa)). 3 residues coordinate a divalent metal cation: Asp16, Glu17, and Asp108.

The protein belongs to the RNase HII family. Requires Mn(2+) as cofactor. It depends on Mg(2+) as a cofactor.

The protein resides in the cytoplasm. The catalysed reaction is Endonucleolytic cleavage to 5'-phosphomonoester.. Its function is as follows. Endonuclease that specifically degrades the RNA of RNA-DNA hybrids. The sequence is that of Ribonuclease HII from Escherichia fergusonii (strain ATCC 35469 / DSM 13698 / CCUG 18766 / IAM 14443 / JCM 21226 / LMG 7866 / NBRC 102419 / NCTC 12128 / CDC 0568-73).